The following is a 145-amino-acid chain: Succinate dehydrogenase assembly factor 2, mitochondrial (145 aa).

It belongs to the SDHAF2 family. In terms of assembly, interacts with the flavoprotein subunit within the SDH catalytic dimer.

The protein resides in the mitochondrion matrix. In terms of biological role, plays an essential role in the assembly of succinate dehydrogenase (SDH), an enzyme complex (also referred to as respiratory complex II) that is a component of both the tricarboxylic acid (TCA) cycle and the mitochondrial electron transport chain, and which couples the oxidation of succinate to fumarate with the reduction of ubiquinone (coenzyme Q) to ubiquinol. Required for flavinylation (covalent attachment of FAD) of the flavoprotein subunit of the SDH catalytic dimer. The polypeptide is Succinate dehydrogenase assembly factor 2, mitochondrial (Yarrowia lipolytica (strain CLIB 122 / E 150) (Yeast)).